We begin with the raw amino-acid sequence, 576 residues long: Adenine deaminase (576 aa).

Belongs to the metallo-dependent hydrolases superfamily. Adenine deaminase family. The cofactor is Mn(2+).

The enzyme catalyses adenine + H2O + H(+) = hypoxanthine + NH4(+). This Syntrophobacter fumaroxidans (strain DSM 10017 / MPOB) protein is Adenine deaminase.